The sequence spans 308 residues: Aspartate carbamoyltransferase catalytic subunit (308 aa).

Residues Arg51 and Thr52 each contribute to the carbamoyl phosphate site. Lys80 contacts L-aspartate. Residues Arg101, His129, and Gln132 each contribute to the carbamoyl phosphate site. L-aspartate contacts are provided by Arg162 and Arg224. Residues Leu263 and Pro264 each contribute to the carbamoyl phosphate site.

Belongs to the aspartate/ornithine carbamoyltransferase superfamily. ATCase family. Heterododecamer (2C3:3R2) of six catalytic PyrB chains organized as two trimers (C3), and six regulatory PyrI chains organized as three dimers (R2).

The catalysed reaction is carbamoyl phosphate + L-aspartate = N-carbamoyl-L-aspartate + phosphate + H(+). It functions in the pathway pyrimidine metabolism; UMP biosynthesis via de novo pathway; (S)-dihydroorotate from bicarbonate: step 2/3. In terms of biological role, catalyzes the condensation of carbamoyl phosphate and aspartate to form carbamoyl aspartate and inorganic phosphate, the committed step in the de novo pyrimidine nucleotide biosynthesis pathway. This is Aspartate carbamoyltransferase catalytic subunit from Bacteroides fragilis (strain ATCC 25285 / DSM 2151 / CCUG 4856 / JCM 11019 / LMG 10263 / NCTC 9343 / Onslow / VPI 2553 / EN-2).